A 240-amino-acid polypeptide reads, in one-letter code: Cysteine-rich venom protein ablomin (240 aa).

Positions 1–19 (MIVFIVLPILAAVLQQSSG) are cleaved as a signal peptide. One can recognise an SCP domain in the interval 38-166 (VDLHNSLRRS…EYSYFYVCQY (129 aa)). Cystine bridges form between C75–C153, C92–C167, C148–C164, C186–C193, C189–C198, C202–C235, C211–C229, and C220–C233. The 34-residue stretch at 202 to 235 (CTQEDVFTNCNSLVQQSNCQHNYIKTNCPASCFC) folds into the ShKT domain.

Belongs to the CRISP family. Expressed by the venom gland.

Its subcellular location is the secreted. Its function is as follows. Blocks contraction of smooth muscle elicited by high potassium-induced depolarization, but does not block caffeine-stimulated contraction. Since high potassium-treatment activates voltage-gated channels and caffeine exposure activates ryanodine receptors, this toxin may target L-type voltage-gated calcium channels (Cav) (and not ryanodine receptors) on smooth muscle. This toxin also shows a little inhibition on cyclic nucleotide-gated CNGA1 channel. The polypeptide is Cysteine-rich venom protein ablomin (Gloydius blomhoffii (Mamushi)).